The following is a 289-amino-acid chain: Formamidopyrimidine-DNA glycosylase (289 aa).

P2 acts as the Schiff-base intermediate with DNA in catalysis. Residue E3 is the Proton donor of the active site. The Proton donor; for beta-elimination activity role is filled by K61. H96, R115, and K161 together coordinate DNA. The FPG-type zinc-finger motif lies at S247 to R281. R271 (proton donor; for delta-elimination activity) is an active-site residue.

Belongs to the FPG family. Monomer. Requires Zn(2+) as cofactor.

It catalyses the reaction Hydrolysis of DNA containing ring-opened 7-methylguanine residues, releasing 2,6-diamino-4-hydroxy-5-(N-methyl)formamidopyrimidine.. The enzyme catalyses 2'-deoxyribonucleotide-(2'-deoxyribose 5'-phosphate)-2'-deoxyribonucleotide-DNA = a 3'-end 2'-deoxyribonucleotide-(2,3-dehydro-2,3-deoxyribose 5'-phosphate)-DNA + a 5'-end 5'-phospho-2'-deoxyribonucleoside-DNA + H(+). In terms of biological role, involved in base excision repair of DNA damaged by oxidation or by mutagenic agents. Acts as a DNA glycosylase that recognizes and removes damaged bases. Has a preference for oxidized purines, such as 7,8-dihydro-8-oxoguanine (8-oxoG). Has AP (apurinic/apyrimidinic) lyase activity and introduces nicks in the DNA strand. Cleaves the DNA backbone by beta-delta elimination to generate a single-strand break at the site of the removed base with both 3'- and 5'-phosphates. The chain is Formamidopyrimidine-DNA glycosylase from Rhodococcus opacus (strain B4).